The primary structure comprises 304 residues: Aspartate carbamoyltransferase catalytic subunit (304 aa).

Residues Arg-53 and Thr-54 each contribute to the carbamoyl phosphate site. Lys-82 is an L-aspartate binding site. 3 residues coordinate carbamoyl phosphate: Arg-103, His-131, and Gln-134. The L-aspartate site is built by Arg-163 and Arg-224. Carbamoyl phosphate-binding residues include Leu-263 and Pro-264.

It belongs to the aspartate/ornithine carbamoyltransferase superfamily. ATCase family. Heterooligomer of catalytic and regulatory chains.

It catalyses the reaction carbamoyl phosphate + L-aspartate = N-carbamoyl-L-aspartate + phosphate + H(+). It participates in pyrimidine metabolism; UMP biosynthesis via de novo pathway; (S)-dihydroorotate from bicarbonate: step 2/3. Functionally, catalyzes the condensation of carbamoyl phosphate and aspartate to form carbamoyl aspartate and inorganic phosphate, the committed step in the de novo pyrimidine nucleotide biosynthesis pathway. In Haloquadratum walsbyi (strain DSM 16790 / HBSQ001), this protein is Aspartate carbamoyltransferase catalytic subunit.